A 121-amino-acid polypeptide reads, in one-letter code: Large ribosomal subunit protein uL18 (121 aa).

It belongs to the universal ribosomal protein uL18 family. Part of the 50S ribosomal subunit; part of the 5S rRNA/L5/L18/L25 subcomplex. Contacts the 5S and 23S rRNAs.

Its function is as follows. This is one of the proteins that bind and probably mediate the attachment of the 5S RNA into the large ribosomal subunit, where it forms part of the central protuberance. The polypeptide is Large ribosomal subunit protein uL18 (Paraburkholderia phytofirmans (strain DSM 17436 / LMG 22146 / PsJN) (Burkholderia phytofirmans)).